The sequence spans 421 residues: Serine hydroxymethyltransferase (421 aa).

(6S)-5,6,7,8-tetrahydrofolate is bound by residues Leu-121 and Gly-125–Leu-127. Lys-229 carries the post-translational modification N6-(pyridoxal phosphate)lysine.

It belongs to the SHMT family. In terms of assembly, homodimer. Requires pyridoxal 5'-phosphate as cofactor.

It localises to the cytoplasm. It carries out the reaction (6R)-5,10-methylene-5,6,7,8-tetrahydrofolate + glycine + H2O = (6S)-5,6,7,8-tetrahydrofolate + L-serine. Its pathway is one-carbon metabolism; tetrahydrofolate interconversion. It participates in amino-acid biosynthesis; glycine biosynthesis; glycine from L-serine: step 1/1. Catalyzes the reversible interconversion of serine and glycine with tetrahydrofolate (THF) serving as the one-carbon carrier. This reaction serves as the major source of one-carbon groups required for the biosynthesis of purines, thymidylate, methionine, and other important biomolecules. Also exhibits THF-independent aldolase activity toward beta-hydroxyamino acids, producing glycine and aldehydes, via a retro-aldol mechanism. This is Serine hydroxymethyltransferase from Actinobacillus pleuropneumoniae serotype 7 (strain AP76).